Here is a 940-residue protein sequence, read N- to C-terminus: Inter-alpha-trypsin inhibitor heavy chain H5 (940 aa).

The signal sequence occupies residues 1–16; the sequence is MLLLLGLCLGLSQCVG. The region spanning 35-161 is the VIT domain; sequence VPRQVRLLQR…KAAFFLSYEE (127 aa). N-linked (GlcNAc...) asparagine glycosylation is found at Asn97 and Asn127. 2 disordered regions span residues 117 to 136 and 208 to 227; these read KSGD…NGEK and SRQR…PSTV. N-linked (GlcNAc...) asparagine glycosylation is present at Asn231. The 184-residue stretch at 295–478 folds into the VWFA domain; it reads NVVFVLDSSA…SQLIGFYDEI (184 aa). A disordered region spans residues 405-432; it reads DGWEAHGRGDAHPQDPQQHPRGRPRPSL. Residues 407–417 are compositionally biased toward basic and acidic residues; the sequence is WEAHGRGDAHP. A glycan (N-linked (GlcNAc...) asparagine) is linked at Asn508. Residues 541 to 571 are disordered; that stretch reads PKTDVPVGPQKAGKDVTGSPRPGGDGERNPN. Residues Asn774, Asn793, and Asn860 are each glycosylated (N-linked (GlcNAc...) asparagine).

Belongs to the ITIH family.

The protein localises to the secreted. Functionally, may act as a tumor suppressor. The sequence is that of Inter-alpha-trypsin inhibitor heavy chain H5 (ITIH5) from Pongo abelii (Sumatran orangutan).